The primary structure comprises 196 residues: MAAEHLLPGPPPSLADFRLEAGGKGTERGSGSSKPTGSSRGPRMAKFLSQDQINEYKECFSLYDKQQRGKIKATDLMVAMRCLGASPTPGEVQRHLQTHGIDGNGELDFSTFLTIMHMQIKQEDPKKEILLAMLMVDKEKKGYVMASDLRSKLTSLGEKLTHKEVDDLFREADIEPNGKVKYDEFIHKITLPGRDY.

The segment at 1–43 (MAAEHLLPGPPPSLADFRLEAGGKGTERGSGSSKPTGSSRGPR) is disordered. Positions 17 to 27 (FRLEAGGKGTE) are enriched in basic and acidic residues. The span at 29-39 (GSGSSKPTGSS) shows a compositional bias: polar residues. 4 consecutive EF-hand domains span residues 51 to 86 (DQIN…LGAS), 87 to 122 (PTPG…QIKQ), 124 to 159 (DPKK…LGEK), and 160 to 195 (LTHK…PGRD).

This sequence belongs to the calmodulin family. As to quaternary structure, interacts with MYO7B; the interaction mediates the association of CALML4 with the IMAC/intermicrovillar adhesion complex. Interacts with MYO7A. In terms of tissue distribution, expressed in the intestinal tract. As to expression, dominant transcript in the intestinal tract.

It localises to the cell projection. The protein resides in the microvillus. In terms of biological role, as part of the intermicrovillar adhesion complex/IMAC plays a role in epithelial brush border differentiation, controlling microvilli organization and length. Acts as a light chain for MYO7B and is required for efficient targeting of the IMAC to the tips of border brush microvilli. The chain is Calmodulin-like protein 4 from Homo sapiens (Human).